The primary structure comprises 306 residues: Protein FdhE homolog (306 aa).

The protein belongs to the FdhE family.

It is found in the cytoplasm. Functionally, necessary for formate dehydrogenase activity. In Glaesserella parasuis serovar 5 (strain SH0165) (Haemophilus parasuis), this protein is Protein FdhE homolog.